A 191-amino-acid polypeptide reads, in one-letter code: Leucyl/phenylalanyl-tRNA--protein transferase (191 aa).

This sequence belongs to the L/F-transferase family.

The protein localises to the cytoplasm. It catalyses the reaction N-terminal L-lysyl-[protein] + L-leucyl-tRNA(Leu) = N-terminal L-leucyl-L-lysyl-[protein] + tRNA(Leu) + H(+). The catalysed reaction is N-terminal L-arginyl-[protein] + L-leucyl-tRNA(Leu) = N-terminal L-leucyl-L-arginyl-[protein] + tRNA(Leu) + H(+). The enzyme catalyses L-phenylalanyl-tRNA(Phe) + an N-terminal L-alpha-aminoacyl-[protein] = an N-terminal L-phenylalanyl-L-alpha-aminoacyl-[protein] + tRNA(Phe). Its function is as follows. Functions in the N-end rule pathway of protein degradation where it conjugates Leu, Phe and, less efficiently, Met from aminoacyl-tRNAs to the N-termini of proteins containing an N-terminal arginine or lysine. The protein is Leucyl/phenylalanyl-tRNA--protein transferase of Nostoc sp. (strain PCC 7120 / SAG 25.82 / UTEX 2576).